The following is a 155-amino-acid chain: Small ribosomal subunit protein uS7cz/uS7cy (155 aa).

This sequence belongs to the universal ribosomal protein uS7 family. In terms of assembly, part of the 30S ribosomal subunit.

It localises to the plastid. The protein resides in the chloroplast. Functionally, one of the primary rRNA binding proteins, it binds directly to 16S rRNA where it nucleates assembly of the head domain of the 30S subunit. The chain is Small ribosomal subunit protein uS7cz/uS7cy (rps7-A) from Populus trichocarpa (Western balsam poplar).